Here is a 482-residue protein sequence, read N- to C-terminus: Glutamate--tRNA ligase 2 (482 aa).

Positions 8-18 (PSPTGQLHIGG) match the 'HIGH' region motif. The short motif at 249-253 (KLSKR) is the 'KMSKS' region element. K252 provides a ligand contact to ATP.

Belongs to the class-I aminoacyl-tRNA synthetase family. Glutamate--tRNA ligase type 1 subfamily. As to quaternary structure, monomer.

It is found in the cytoplasm. It catalyses the reaction tRNA(Glu) + L-glutamate + ATP = L-glutamyl-tRNA(Glu) + AMP + diphosphate. In terms of biological role, catalyzes the attachment of glutamate to tRNA(Glu) in a two-step reaction: glutamate is first activated by ATP to form Glu-AMP and then transferred to the acceptor end of tRNA(Glu). The protein is Glutamate--tRNA ligase 2 of Caldicellulosiruptor saccharolyticus (strain ATCC 43494 / DSM 8903 / Tp8T 6331).